The sequence spans 318 residues: Endochitinase 3 (318 aa).

The N-terminal stretch at 1–18 (EFTIFSLLFSLLLLNASA) is a signal peptide. The region spanning 19–60 (EQCGSQAGGALCAPGLCCSKFGWCGNTNDYCGPGNCQSQCPG) is the Chitin-binding type-1 domain. 7 cysteine pairs are disulfide-bonded: cysteine 21–cysteine 36, cysteine 30–cysteine 42, cysteine 35–cysteine 49, cysteine 54–cysteine 58, cysteine 89–cysteine 152, cysteine 164–cysteine 172, and cysteine 271–cysteine 303. The active-site Proton donor is glutamate 134. Residues 312 to 318 (GLLVDTV) constitute a propeptide, removed in mature form, vacuolar targeting.

It belongs to the glycosyl hydrolase 19 family. Chitinase class I subfamily.

Its subcellular location is the vacuole. The enzyme catalyses Random endo-hydrolysis of N-acetyl-beta-D-glucosaminide (1-&gt;4)-beta-linkages in chitin and chitodextrins.. Functionally, defense against chitin-containing fungal pathogens. The sequence is that of Endochitinase 3 (CHTB3) from Solanum tuberosum (Potato).